The primary structure comprises 407 residues: Methylthioribose kinase (407 aa).

ATP-binding positions include asparagine 40, lysine 57, and 111–113; that span reads EDL. A substrate-binding site is contributed by aspartate 229. 246-248 contacts ATP; it reads DAE. Arginine 344 is a binding site for substrate.

It belongs to the methylthioribose kinase family. As to quaternary structure, homodimer.

It catalyses the reaction 5-(methylsulfanyl)-D-ribose + ATP = 5-(methylsulfanyl)-alpha-D-ribose 1-phosphate + ADP + H(+). It functions in the pathway amino-acid biosynthesis; L-methionine biosynthesis via salvage pathway; S-methyl-5-thio-alpha-D-ribose 1-phosphate from S-methyl-5'-thioadenosine (hydrolase route): step 2/2. In terms of biological role, catalyzes the phosphorylation of methylthioribose into methylthioribose-1-phosphate. In Yersinia pseudotuberculosis serotype O:1b (strain IP 31758), this protein is Methylthioribose kinase.